A 97-amino-acid polypeptide reads, in one-letter code: Large ribosomal subunit protein bL28 (97 aa).

The protein belongs to the bacterial ribosomal protein bL28 family.

In Rickettsia bellii (strain OSU 85-389), this protein is Large ribosomal subunit protein bL28.